A 451-amino-acid chain; its full sequence is UDP-N-acetylmuramate--L-alanine ligase (451 aa).

An ATP-binding site is contributed by 110-116 (GTHGKTT).

The protein belongs to the MurCDEF family.

The protein localises to the cytoplasm. The catalysed reaction is UDP-N-acetyl-alpha-D-muramate + L-alanine + ATP = UDP-N-acetyl-alpha-D-muramoyl-L-alanine + ADP + phosphate + H(+). It participates in cell wall biogenesis; peptidoglycan biosynthesis. Cell wall formation. The protein is UDP-N-acetylmuramate--L-alanine ligase of Francisella tularensis subsp. tularensis (strain SCHU S4 / Schu 4).